The sequence spans 364 residues: Paraneoplastic antigen Ma2 (364 aa).

Residue alanine 2 is modified to N-acetylalanine. Residues 335–351 (EEEEASFENESIEEPEE) are compositionally biased toward acidic residues. A disordered region spans residues 335-364 (EEEEASFENESIEEPEERDGYGRWNHEGDD). A compositionally biased stretch (basic and acidic residues) spans 352–364 (RDGYGRWNHEGDD).

Belongs to the PNMA family. Brain-specific. In some cancer patients, specifically expressed by testicular tumor cells.

It is found in the nucleus. The protein localises to the nucleolus. The chain is Paraneoplastic antigen Ma2 (PNMA2) from Homo sapiens (Human).